Consider the following 364-residue polypeptide: MLRRLNSPTAILVRTASTRTEKLEEIRDRLSKGPNFQDFIQNSDNSKDDFENYDGKLRREKGETQQLRLPPWLKTTIPMGKNYAKIKSQLRDLKLSTVCEEARCPNIGECWGGGEHGTQTATIMLMGDTCTRGCRFCSVKTARAPPPLDVNEPVNTAKAISSWGLDYIVLTSVDRDDLPDGGSKHIAETVREIKARNSNIFVECLVPDFRGNLECVQTIAGCGLDVYAHNIETVEKLTPFVRDRRAHYRQTLKVLNEAKQFNPNLITKSSLMLGLGETDAEVEQTMLDLREAGVECLTLGQYMQPTKRHLKVIEYVTPEKFKHWEQRGNELGFLYTASGPLVRSSYKAGEFFITSILANRRKSV.

Positions 34 to 53 (PNFQDFIQNSDNSKDDFENY) are disordered. [4Fe-4S] cluster contacts are provided by Cys99, Cys104, Cys110, Cys130, Cys134, Cys137, and Ser345. The Radical SAM core domain maps to 115–334 (EHGTQTATIM…EQRGNELGFL (220 aa)).

The protein belongs to the radical SAM superfamily. Lipoyl synthase family. [4Fe-4S] cluster is required as a cofactor.

It is found in the mitochondrion. It catalyses the reaction [[Fe-S] cluster scaffold protein carrying a second [4Fe-4S](2+) cluster] + N(6)-octanoyl-L-lysyl-[protein] + 2 oxidized [2Fe-2S]-[ferredoxin] + 2 S-adenosyl-L-methionine + 4 H(+) = [[Fe-S] cluster scaffold protein] + N(6)-[(R)-dihydrolipoyl]-L-lysyl-[protein] + 4 Fe(3+) + 2 hydrogen sulfide + 2 5'-deoxyadenosine + 2 L-methionine + 2 reduced [2Fe-2S]-[ferredoxin]. Its pathway is protein modification; protein lipoylation via endogenous pathway; protein N(6)-(lipoyl)lysine from octanoyl-[acyl-carrier-protein]: step 2/2. Its function is as follows. Catalyzes the radical-mediated insertion of two sulfur atoms into the C-6 and C-8 positions of the octanoyl moiety bound to the lipoyl domains of lipoate-dependent enzymes, thereby converting the octanoylated domains into lipoylated derivatives. The polypeptide is Lipoyl synthase, mitochondrial (Drosophila grimshawi (Hawaiian fruit fly)).